We begin with the raw amino-acid sequence, 219 residues long: 7-cyano-7-deazaguanine synthase (219 aa).

Phe-10–Leu-20 lines the ATP pocket. Residues Cys-186, Cys-195, Cys-198, and Cys-201 each coordinate Zn(2+).

The protein belongs to the QueC family. In terms of assembly, homodimer. Zn(2+) serves as cofactor.

The enzyme catalyses 7-carboxy-7-deazaguanine + NH4(+) + ATP = 7-cyano-7-deazaguanine + ADP + phosphate + H2O + H(+). The protein operates within purine metabolism; 7-cyano-7-deazaguanine biosynthesis. Catalyzes the ATP-dependent conversion of 7-carboxy-7-deazaguanine (CDG) to 7-cyano-7-deazaguanine (preQ(0)). This is 7-cyano-7-deazaguanine synthase from Bacillus velezensis (strain DSM 23117 / BGSC 10A6 / LMG 26770 / FZB42) (Bacillus amyloliquefaciens subsp. plantarum).